The primary structure comprises 111 residues: Ribonuclease P protein component (111 aa).

The protein belongs to the RnpA family. As to quaternary structure, consists of a catalytic RNA component (M1 or rnpB) and a protein subunit.

The catalysed reaction is Endonucleolytic cleavage of RNA, removing 5'-extranucleotides from tRNA precursor.. RNaseP catalyzes the removal of the 5'-leader sequence from pre-tRNA to produce the mature 5'-terminus. It can also cleave other RNA substrates such as 4.5S RNA. The protein component plays an auxiliary but essential role in vivo by binding to the 5'-leader sequence and broadening the substrate specificity of the ribozyme. This chain is Ribonuclease P protein component, found in Clostridium botulinum (strain Loch Maree / Type A3).